Reading from the N-terminus, the 1056-residue chain is ISWI chromatin-remodeling complex ATPase CHR11 (1056 aa).

Residues methionine 1–alanine 10 are compositionally biased toward low complexity. 2 disordered regions span residues methionine 1–glutamate 80 and lysine 133–asparagine 175. Composition is skewed to acidic residues over residues phenylalanine 11 to glutamate 32 and proline 60 to lysine 73. A coiled-coil region spans residues serine 12–serine 105. Residues lysine 141 to serine 151 show a composition bias toward basic residues. Residues glutamate 155–glycine 169 show a composition bias toward acidic residues. Residues isoleucine 201–glutamate 366 enclose the Helicase ATP-binding domain. Residue aspartate 214–threonine 221 participates in ATP binding. Residues aspartate 317–histidine 320 carry the DEAH box motif. The Helicase C-terminal domain maps to leucine 494 to alanine 645. 2 disordered regions span residues tryptophan 738–proline 774 and isoleucine 814–glutamate 833. The segment covering aspartate 815–glutamate 833 has biased composition (acidic residues). 2 SANT domains span residues glutamate 840–lysine 892 and glutamine 941–isoleucine 1002. A disordered region spans residues glutamate 1011–arginine 1056. The segment covering threonine 1047–arginine 1056 has biased composition (basic residues).

Belongs to the SNF2/RAD54 helicase family. ISWI subfamily. As to quaternary structure, interacts with RLT1 and RLT2. Interacts (via C-terminus) with RLT1 (via the DDT domain), RLT2 (via the DDT domain), PTM (via the DDT domain) and DDR4 (via the DDT domain). Binds to FGT1. Highly expressed in growing tissues such as inflorescence and flower meristems, young leaves and floral organs. Expressed in roots, rosette and cauline leaves, stems, flowers, inflorescences and siliques.

It localises to the nucleus. Possesses intrinsic ATP-dependent nucleosome-remodeling activity. Constitutes the catalytic subunit of several complexes capable of forming ordered nucleosome arrays on chromatin. Involved in the formation of nucleosome distribution patterns. Involved in nuclear proliferation during megagametogenesis and cell expansion in the sporophyte. Required for the maintenance of the plant vegetative phase. In association with RLT1 or RLT2 may prevent the early activation of the vegetative-to-reproductive transition by regulating key genes that contribute to flower timing, such as FT, SEP1, SEP3, AGL8/FUL, SOC1 and FLC. Necessary to acquire heat stress (HS) memory. The protein is ISWI chromatin-remodeling complex ATPase CHR11 of Arabidopsis thaliana (Mouse-ear cress).